A 341-amino-acid polypeptide reads, in one-letter code: Cathepsin B-like cysteine proteinase 1 (341 aa).

An N-terminal signal peptide occupies residues 1-19 (MKYLFFALCLYLYQGISEA). A propeptide spans 20–88 (EVPAEQIPLE…VEDEELEENN (69 aa)) (activation peptide). A glycan (N-linked (GlcNAc...) asparagine) is linked at Asn103. 6 cysteine pairs are disulfide-bonded: Cys104–Cys133, Cys116–Cys160, Cys152–Cys218, Cys153–Cys156, Cys189–Cys222, and Cys197–Cys209. Cys119 is an active-site residue. Residue Asn202 is glycosylated (N-linked (GlcNAc...) asparagine). Catalysis depends on residues His288 and Asn308.

This sequence belongs to the peptidase C1 family.

Expression of the protease correlates with blood-feeding and suggests a role for the protease in blood digestion. This chain is Cathepsin B-like cysteine proteinase 1 (CP-1), found in Ostertagia ostertagi (Brown stomach worm).